Reading from the N-terminus, the 325-residue chain is Tetraacyldisaccharide 4'-kinase (325 aa).

58-65 (TVGGSGKT) contacts ATP.

The protein belongs to the LpxK family.

The catalysed reaction is a lipid A disaccharide + ATP = a lipid IVA + ADP + H(+). It functions in the pathway glycolipid biosynthesis; lipid IV(A) biosynthesis; lipid IV(A) from (3R)-3-hydroxytetradecanoyl-[acyl-carrier-protein] and UDP-N-acetyl-alpha-D-glucosamine: step 6/6. Its function is as follows. Transfers the gamma-phosphate of ATP to the 4'-position of a tetraacyldisaccharide 1-phosphate intermediate (termed DS-1-P) to form tetraacyldisaccharide 1,4'-bis-phosphate (lipid IVA). In Coxiella burnetii (strain CbuG_Q212) (Coxiella burnetii (strain Q212)), this protein is Tetraacyldisaccharide 4'-kinase.